Reading from the N-terminus, the 109-residue chain is Nucleoid-associated protein Sbal223_1770 (109 aa).

The protein belongs to the YbaB/EbfC family. In terms of assembly, homodimer.

Its subcellular location is the cytoplasm. The protein resides in the nucleoid. In terms of biological role, binds to DNA and alters its conformation. May be involved in regulation of gene expression, nucleoid organization and DNA protection. This chain is Nucleoid-associated protein Sbal223_1770, found in Shewanella baltica (strain OS223).